Here is a 219-residue protein sequence, read N- to C-terminus: Ras-related protein Rab-3B (219 aa).

At Ala-2 the chain carries N-acetylalanine. Positions 31, 32, 33, 34, 35, 36, 37, 49, and 53 each coordinate GTP. Position 36 (Thr-36) interacts with Mg(2+). Residues 45–58 (DTFTPAFVSTVGID) carry the Switch 1 motif. Positions 54 and 77 each coordinate Mg(2+). The short motif at 78-96 (TAGQERYRTITTAYYRGAM) is the Switch 2 element. Position 80 (Gly-80) interacts with GTP. A Phosphothreonine; by LRRK2 modification is found at Thr-86. Asn-135, Lys-136, Asp-138, Ala-166, and Lys-167 together coordinate GTP. Residues Ser-188 and Ser-190 each carry the phosphoserine modification. Residues Cys-217 and Cys-219 are each lipidated (S-geranylgeranyl cysteine). Cysteine methyl ester is present on Cys-219.

This sequence belongs to the small GTPase superfamily. Rab family. As to quaternary structure, interacts with RIMS1, RIMS2, RPH3A and RPH3AL. The GTP-bound form interacts with GAS8/DRC4 (via coiled-coil domains). Interacts with GDI2, CHM and CHML; phosphorylation at Thr-86 disrupts these interactions. Interacts with MADD (via uDENN domain); the GTP-bound form is preferred for interaction. It depends on Mg(2+) as a cofactor. In terms of processing, phosphorylation of Thr-86 in the switch II region by LRRK2 prevents the association of RAB regulatory proteins, including CHM, CHML and RAB GDP dissociation inhibitor GDI2. In terms of tissue distribution, abundantly expressed in testis, lung and brain.

It is found in the cell membrane. It localises to the golgi apparatus. It carries out the reaction GTP + H2O = GDP + phosphate + H(+). Its activity is regulated as follows. Regulated by guanine nucleotide exchange factors (GEFs) which promote the exchange of bound GDP for free GTP. Regulated by GTPase activating proteins (GAPs) which increase the GTP hydrolysis activity. Inhibited by GDP dissociation inhibitors (GDIs) which prevent Rab-GDP dissociation. Functionally, the small GTPases Rab are key regulators of intracellular membrane trafficking, from the formation of transport vesicles to their fusion with membranes. Rabs cycle between an inactive GDP-bound form and an active GTP-bound form that is able to recruit to membranes different sets of downstream effectors directly responsible for vesicle formation, movement, tethering and fusion. The sequence is that of Ras-related protein Rab-3B from Mus musculus (Mouse).